Consider the following 490-residue polypeptide: ATP synthase subunit beta, plastid (490 aa).

170-177 (GGAGVGKT) lines the ATP pocket.

This sequence belongs to the ATPase alpha/beta chains family. F-type ATPases have 2 components, CF(1) - the catalytic core - and CF(0) - the membrane proton channel. CF(1) has five subunits: alpha(3), beta(3), gamma(1), delta(1), epsilon(1). CF(0) has four main subunits: a(1), b(1), b'(1) and c(9-12).

The protein localises to the plastid membrane. It carries out the reaction ATP + H2O + 4 H(+)(in) = ADP + phosphate + 5 H(+)(out). Produces ATP from ADP in the presence of a proton gradient across the membrane. The catalytic sites are hosted primarily by the beta subunits. This chain is ATP synthase subunit beta, plastid, found in Cuscuta exaltata (Tall dodder).